Here is a 234-residue protein sequence, read N- to C-terminus: Sugar fermentation stimulation protein A (234 aa).

The segment at residues 201 to 220 (LLSEAQNKGVEVLAYKAELS) is a DNA-binding region (H-T-H motif).

This sequence belongs to the SfsA family.

Functionally, binds to DNA non-specifically. Could be a regulatory factor involved in maltose metabolism. The protein is Sugar fermentation stimulation protein A of Salmonella gallinarum (strain 287/91 / NCTC 13346).